We begin with the raw amino-acid sequence, 170 residues long: Bifunctional protein PyrR (170 aa).

A PRPP-binding motif is present at residues 90–102 (LVLIDDVLMSGRT).

Belongs to the purine/pyrimidine phosphoribosyltransferase family. PyrR subfamily.

It carries out the reaction UMP + diphosphate = 5-phospho-alpha-D-ribose 1-diphosphate + uracil. In terms of biological role, regulates the transcription of the pyrimidine nucleotide (pyr) operon in response to exogenous pyrimidines. Functionally, also displays a weak uracil phosphoribosyltransferase activity which is not physiologically significant. The protein is Bifunctional protein PyrR of Pseudomonas savastanoi pv. phaseolicola (strain 1448A / Race 6) (Pseudomonas syringae pv. phaseolicola (strain 1448A / Race 6)).